Here is a 360-residue protein sequence, read N- to C-terminus: NADH-quinone oxidoreductase subunit H (360 aa).

8 helical membrane-spanning segments follow: residues 22 to 42 (ITVG…IPLI), 97 to 117 (ALFY…WAVI), 130 to 150 (IGLL…IIAG), 170 to 190 (ISYE…SGSM), 208 to 228 (VFSW…ISAV), 255 to 275 (GFAF…IAAL), 292 to 312 (WGFI…AVLY), and 336 to 356 (VLIP…ISPL).

Belongs to the complex I subunit 1 family. In terms of assembly, NDH-1 is composed of 14 different subunits. Subunits NuoA, H, J, K, L, M, N constitute the membrane sector of the complex.

It is found in the cell inner membrane. It carries out the reaction a quinone + NADH + 5 H(+)(in) = a quinol + NAD(+) + 4 H(+)(out). Its function is as follows. NDH-1 shuttles electrons from NADH, via FMN and iron-sulfur (Fe-S) centers, to quinones in the respiratory chain. The immediate electron acceptor for the enzyme in this species is believed to be ubiquinone. Couples the redox reaction to proton translocation (for every two electrons transferred, four hydrogen ions are translocated across the cytoplasmic membrane), and thus conserves the redox energy in a proton gradient. This subunit may bind ubiquinone. The polypeptide is NADH-quinone oxidoreductase subunit H (Neisseria meningitidis serogroup C / serotype 2a (strain ATCC 700532 / DSM 15464 / FAM18)).